The sequence spans 289 residues: 2-dehydro-3-deoxyphosphooctonate aldolase (289 aa).

This sequence belongs to the KdsA family.

Its subcellular location is the cytoplasm. It catalyses the reaction D-arabinose 5-phosphate + phosphoenolpyruvate + H2O = 3-deoxy-alpha-D-manno-2-octulosonate-8-phosphate + phosphate. It functions in the pathway carbohydrate biosynthesis; 3-deoxy-D-manno-octulosonate biosynthesis; 3-deoxy-D-manno-octulosonate from D-ribulose 5-phosphate: step 2/3. Its pathway is bacterial outer membrane biogenesis; lipopolysaccharide biosynthesis. The polypeptide is 2-dehydro-3-deoxyphosphooctonate aldolase (Cupriavidus taiwanensis (strain DSM 17343 / BCRC 17206 / CCUG 44338 / CIP 107171 / LMG 19424 / R1) (Ralstonia taiwanensis (strain LMG 19424))).